The chain runs to 203 residues: uncharacterized protein (203 aa).

This is an uncharacterized protein from Pasteurella multocida (strain Pm70).